Reading from the N-terminus, the 698-residue chain is PWWP domain-containing DNA repair factor 3A (698 aa).

Disordered regions lie at residues 102–145 and 159–386; these read TSLS…EDDQ and CSPK…EEPP. Ser-105 carries the phosphoserine modification. Residues 129–139 are compositionally biased toward polar residues; sequence SQVSSAPSPSF. A phosphoserine mark is found at Ser-165, Ser-168, and Ser-170. The span at 200-211 shows a compositional bias: polar residues; it reads DESQNGSGSQLD. Composition is skewed to basic and acidic residues over residues 212–235 and 341–350; these read HGQE…RGKA and RAGDSDRPEE. Residues Ser-355 and Ser-356 each carry the phosphoserine modification. The segment covering 370 to 384 has biased composition (acidic residues); the sequence is EEEEEEEEEEEEEEE. The 62-residue stretch at 399-460 folds into the PWWP domain; that stretch reads VGMLVWLKYQ…KHFDCKEKHA (62 aa).

Belongs to the PWWP3A family. As to quaternary structure, interacts with TP53BP1 (via BRCT domain); the interaction is not dependent on its phosphorylation status. Binds nucleosomes. Interacts with trimethylated 'Lys-36' of histone H3 (H3K36me3) (in vitro).

It is found in the nucleus. Its function is as follows. Involved in the DNA damage response pathway by contributing to the maintenance of chromatin architecture. Recruited to the vicinity of DNA breaks by TP53BP1 and plays an accessory role to facilitate damage-induced chromatin changes and promoting chromatin relaxation. Required for efficient DNA repair and cell survival following DNA damage. The protein is PWWP domain-containing DNA repair factor 3A of Rattus norvegicus (Rat).